The chain runs to 225 residues: 7-carboxy-7-deazaguanine synthase (225 aa).

Residues 12–14 (IQG) and R27 contribute to the substrate site. One can recognise a Radical SAM core domain in the interval 18-225 (YIGVRQLFVR…PQVHKYLGVR (208 aa)). Residues C31, C35, and C38 each contribute to the [4Fe-4S] cluster site. T40 provides a ligand contact to Mg(2+). T80 contributes to the substrate binding site. G82 contributes to the S-adenosyl-L-methionine binding site.

It belongs to the radical SAM superfamily. 7-carboxy-7-deazaguanine synthase family. As to quaternary structure, homodimer. [4Fe-4S] cluster serves as cofactor. The cofactor is S-adenosyl-L-methionine. It depends on Mg(2+) as a cofactor.

It carries out the reaction 6-carboxy-5,6,7,8-tetrahydropterin + H(+) = 7-carboxy-7-deazaguanine + NH4(+). It functions in the pathway purine metabolism; 7-cyano-7-deazaguanine biosynthesis. Functionally, catalyzes the complex heterocyclic radical-mediated conversion of 6-carboxy-5,6,7,8-tetrahydropterin (CPH4) to 7-carboxy-7-deazaguanine (CDG), a step common to the biosynthetic pathways of all 7-deazapurine-containing compounds. This chain is 7-carboxy-7-deazaguanine synthase, found in Archaeoglobus fulgidus (strain ATCC 49558 / DSM 4304 / JCM 9628 / NBRC 100126 / VC-16).